A 320-amino-acid polypeptide reads, in one-letter code: ATP-dependent 6-phosphofructokinase (320 aa).

Gly12 is a binding site for ATP. ADP is bound by residues 22–26 and 55–60; these read RGVVR and RYSVSD. ATP contacts are provided by residues 73–74 and 103–106; these read RF and GDGS. Asp104 is a Mg(2+) binding site. 126–128 is a binding site for substrate; the sequence is TID. The active-site Proton acceptor is the Asp128. Arg155 contacts ADP. Residues Arg163 and 170 to 172 each bind substrate; that span reads MGR. ADP is bound by residues 186–188, Lys212, and 214–216; these read GCE and KKH. Substrate is bound by residues Glu223, Arg244, and 250–253; that span reads HIQR.

Belongs to the phosphofructokinase type A (PFKA) family. ATP-dependent PFK group I subfamily. Prokaryotic clade 'B1' sub-subfamily. As to quaternary structure, homotetramer. Mg(2+) serves as cofactor.

The protein localises to the cytoplasm. The enzyme catalyses beta-D-fructose 6-phosphate + ATP = beta-D-fructose 1,6-bisphosphate + ADP + H(+). The protein operates within carbohydrate degradation; glycolysis; D-glyceraldehyde 3-phosphate and glycerone phosphate from D-glucose: step 3/4. Its activity is regulated as follows. Allosterically activated by ADP and other diphosphonucleosides, and allosterically inhibited by phosphoenolpyruvate. Catalyzes the phosphorylation of D-fructose 6-phosphate to fructose 1,6-bisphosphate by ATP, the first committing step of glycolysis. This is ATP-dependent 6-phosphofructokinase from Citrobacter koseri (strain ATCC BAA-895 / CDC 4225-83 / SGSC4696).